The sequence spans 311 residues: Protoheme IX farnesyltransferase (311 aa).

Helical transmembrane passes span 32-52 (VMSL…VSIN), 53-73 (PWYG…AGVL), 104-124 (FVFG…FINW), 125-145 (FAAL…TIWL), 153-173 (IVIG…AATG), 180-200 (FLLF…LSLF), 224-244 (KQIL…FIID), 245-265 (FAGI…IYFA), and 290-310 (FYLA…YFII).

It belongs to the UbiA prenyltransferase family. Protoheme IX farnesyltransferase subfamily.

Its subcellular location is the cell inner membrane. The catalysed reaction is heme b + (2E,6E)-farnesyl diphosphate + H2O = Fe(II)-heme o + diphosphate. It functions in the pathway porphyrin-containing compound metabolism; heme O biosynthesis; heme O from protoheme: step 1/1. In terms of biological role, converts heme B (protoheme IX) to heme O by substitution of the vinyl group on carbon 2 of heme B porphyrin ring with a hydroxyethyl farnesyl side group. The polypeptide is Protoheme IX farnesyltransferase (Bartonella quintana (strain Toulouse) (Rochalimaea quintana)).